The chain runs to 311 residues: Glycosyltransferase 6 domain-containing protein 1 (311 aa).

Residues 1-5 (MKAKR) lie on the Cytoplasmic side of the membrane. A helical; Signal-anchor for type II membrane protein membrane pass occupies residues 6–26 (RILLQLLTFCLFLLLLAKIHF). Over 27–311 (RNHQEEELLL…KIAHHPIDTL (285 aa)) the chain is Lumenal. Asn-77 is a glycosylation site (N-linked (GlcNAc...) asparagine). Residues 85 to 90 (FAVGSL), 176 to 178 (NIN), and 198 to 201 (HPWW) each bind substrate. Glu-266 acts as the Nucleophile in catalysis.

Belongs to the glycosyltransferase 6 family. It depends on Mn(2+) as a cofactor.

It localises to the membrane. This Mus musculus (Mouse) protein is Glycosyltransferase 6 domain-containing protein 1 (Glt6d1).